A 518-amino-acid chain; its full sequence is Probable G-protein coupled receptor Mth-like 2 (518 aa).

An N-terminal signal peptide occupies residues 1–26 (MIASSKMLLSASILIYFLLNLQSSSA). The Extracellular portion of the chain corresponds to 27-220 (EIADCSFYDT…CLILPSRTGQ (194 aa)). Disulfide bonds link Cys31/Cys85, Cys87/Cys92, Cys96/Cys190, Cys97/Cys108, and Cys152/Cys211. A glycan (N-linked (GlcNAc...) asparagine) is linked at Asn47. N-linked (GlcNAc...) asparagine glycosylation is found at Asn111, Asn125, and Asn201. The helical transmembrane segment at 221–241 (TVVMITSLICLVLTIAVYLCV) threads the bilayer. The Cytoplasmic portion of the chain corresponds to 242-250 (KKLMNLEGK). Residues 251-271 (CFICYMMCLFFGYLFLLLDLW) form a helical membrane-spanning segment. Over 272 to 279 (ELSLDFCK) the chain is Extracellular. The chain crosses the membrane as a helical span at residues 280–300 (AAGFLGYFFVMAAFFWLSIIS). Residues 301 to 321 (RHYWKCLTNPCASMNIRSERA) lie on the Cytoplasmic side of the membrane. A helical membrane pass occupies residues 322–342 (FLLYSCFAWAMPLALTGVTYL). The Extracellular segment spans residues 343–371 (ADNVVNNEEWQPRVGDEGHCWIYTKSWSA). A helical transmembrane segment spans residues 372–392 (MVYFYGPMVLLILFNITMFVL). The Cytoplasmic segment spans residues 393-426 (TAKHIIDSKRTLRKIARNEGRIQKLNSDKQNYTQ). The helical transmembrane segment at 427 to 447 (FLLLFTVMGMSWSFEIFSYLV) threads the bilayer. At 448–455 (QREKLWVN) the chain is on the extracellular side. A helical membrane pass occupies residues 456–476 (IFLVADYFNWSQGVIIFVLFI). Topologically, residues 477–518 (LRRKTLVLFKKQIFPKQRAFSRSATQSTIESISQTKRHFNMT) are cytoplasmic.

The protein belongs to the G-protein coupled receptor 2 family. Mth subfamily.

It is found in the cell membrane. This Drosophila melanogaster (Fruit fly) protein is Probable G-protein coupled receptor Mth-like 2 (mthl2).